A 272-amino-acid chain; its full sequence is ATP synthase subunit a (272 aa).

Helical transmembrane passes span 41–61, 102–122, 147–167, 212–232, and 243–263; these read TLNI…LALF, IAPL…MDLV, DVNI…FYSI, LFGN…LLPW, and AIFH…LTIV.

It belongs to the ATPase A chain family. In terms of assembly, F-type ATPases have 2 components, CF(1) - the catalytic core - and CF(0) - the membrane proton channel. CF(1) has five subunits: alpha(3), beta(3), gamma(1), delta(1), epsilon(1). CF(0) has three main subunits: a(1), b(2) and c(9-12). The alpha and beta chains form an alternating ring which encloses part of the gamma chain. CF(1) is attached to CF(0) by a central stalk formed by the gamma and epsilon chains, while a peripheral stalk is formed by the delta and b chains.

It is found in the cell inner membrane. Functionally, key component of the proton channel; it plays a direct role in the translocation of protons across the membrane. This chain is ATP synthase subunit a, found in Edwardsiella ictaluri (strain 93-146).